We begin with the raw amino-acid sequence, 198 residues long: Imidazoleglycerol-phosphate dehydratase (198 aa).

Belongs to the imidazoleglycerol-phosphate dehydratase family.

Its subcellular location is the cytoplasm. The catalysed reaction is D-erythro-1-(imidazol-4-yl)glycerol 3-phosphate = 3-(imidazol-4-yl)-2-oxopropyl phosphate + H2O. The protein operates within amino-acid biosynthesis; L-histidine biosynthesis; L-histidine from 5-phospho-alpha-D-ribose 1-diphosphate: step 6/9. The sequence is that of Imidazoleglycerol-phosphate dehydratase from Methylobacillus flagellatus (strain ATCC 51484 / DSM 6875 / VKM B-1610 / KT).